The chain runs to 139 residues: Single-stranded DNA-binding protein 2 (139 aa).

Residues 1 to 104 enclose the SSB domain; that stretch reads MLNRTVLVGR…VVADSVQFLE (104 aa). Residues 103–139 form a disordered region; it reads LEPKNNNKQNNQQHNGQTQTGNNPFDNTEEDFSDLPF. Residues 106–125 show a composition bias toward low complexity; it reads KNNNKQNNQQHNGQTQTGNN. Over residues 129-139 the composition is skewed to acidic residues; sequence NTEEDFSDLPF.

In terms of assembly, homotetramer.

The chain is Single-stranded DNA-binding protein 2 (ssb-p) from Staphylococcus aureus (strain COL).